The sequence spans 166 residues: Regulatory protein RecX (166 aa).

It belongs to the RecX family.

Its subcellular location is the cytoplasm. Functionally, modulates RecA activity. This Salmonella agona (strain SL483) protein is Regulatory protein RecX.